Reading from the N-terminus, the 158-residue chain is Cyclic pyranopterin monophosphate synthase (158 aa).

Residues 75-77 (LCH) and 113-114 (ME) contribute to the substrate site. Asp128 is an active-site residue.

This sequence belongs to the MoaC family. In terms of assembly, homohexamer; trimer of dimers.

It catalyses the reaction (8S)-3',8-cyclo-7,8-dihydroguanosine 5'-triphosphate = cyclic pyranopterin phosphate + diphosphate. It participates in cofactor biosynthesis; molybdopterin biosynthesis. Catalyzes the conversion of (8S)-3',8-cyclo-7,8-dihydroguanosine 5'-triphosphate to cyclic pyranopterin monophosphate (cPMP). In Polynucleobacter asymbioticus (strain DSM 18221 / CIP 109841 / QLW-P1DMWA-1) (Polynucleobacter necessarius subsp. asymbioticus), this protein is Cyclic pyranopterin monophosphate synthase.